The following is a 190-amino-acid chain: Peptidyl-tRNA hydrolase (190 aa).

Phenylalanine 14 lines the tRNA pocket. Histidine 19 (proton acceptor) is an active-site residue. TRNA-binding residues include methionine 64, asparagine 66, and asparagine 112.

It belongs to the PTH family. As to quaternary structure, monomer.

It localises to the cytoplasm. It carries out the reaction an N-acyl-L-alpha-aminoacyl-tRNA + H2O = an N-acyl-L-amino acid + a tRNA + H(+). Functionally, hydrolyzes ribosome-free peptidyl-tRNAs (with 1 or more amino acids incorporated), which drop off the ribosome during protein synthesis, or as a result of ribosome stalling. In terms of biological role, catalyzes the release of premature peptidyl moieties from peptidyl-tRNA molecules trapped in stalled 50S ribosomal subunits, and thus maintains levels of free tRNAs and 50S ribosomes. This Staphylococcus haemolyticus (strain JCSC1435) protein is Peptidyl-tRNA hydrolase.